A 287-amino-acid polypeptide reads, in one-letter code: Ribosomal RNA small subunit methyltransferase A (287 aa).

S-adenosyl-L-methionine is bound by residues Asn-28, Leu-30, Gly-55, Glu-77, Asp-103, and Asn-123.

The protein belongs to the class I-like SAM-binding methyltransferase superfamily. rRNA adenine N(6)-methyltransferase family. RsmA subfamily.

It localises to the cytoplasm. It carries out the reaction adenosine(1518)/adenosine(1519) in 16S rRNA + 4 S-adenosyl-L-methionine = N(6)-dimethyladenosine(1518)/N(6)-dimethyladenosine(1519) in 16S rRNA + 4 S-adenosyl-L-homocysteine + 4 H(+). In terms of biological role, specifically dimethylates two adjacent adenosines (A1518 and A1519) in the loop of a conserved hairpin near the 3'-end of 16S rRNA in the 30S particle. May play a critical role in biogenesis of 30S subunits. In Rhodopseudomonas palustris (strain TIE-1), this protein is Ribosomal RNA small subunit methyltransferase A.